Consider the following 638-residue polypeptide: Chaperone protein DnaK 2 (638 aa).

A Phosphothreonine; by autocatalysis modification is found at Thr-199. A disordered region spans residues 604-626; sequence AKEQAQSAPEGAQEADAAPADDV. Residues 613 to 624 are compositionally biased toward low complexity; the sequence is EGAQEADAAPAD.

The protein belongs to the heat shock protein 70 family.

In terms of biological role, acts as a chaperone. The chain is Chaperone protein DnaK 2 from Colwellia psychrerythraea (strain 34H / ATCC BAA-681) (Vibrio psychroerythus).